The chain runs to 223 residues: Ribonuclease T (223 aa).

Over residues 1 to 11 the composition is skewed to acidic residues; that stretch reads MSDDHFDDEQE. Residues 1–21 are disordered; it reads MSDDHFDDEQEGSSGGPRHPM. The Exonuclease domain maps to 31-205; that stretch reads VVVDVETGGF…YDTEKTAELF (175 aa). Residues aspartate 34, glutamate 36, histidine 192, and aspartate 197 each coordinate Mg(2+). The Proton donor/acceptor role is filled by histidine 192.

This sequence belongs to the RNase T family. Homodimer. Requires Mg(2+) as cofactor.

In terms of biological role, trims short 3' overhangs of a variety of RNA species, leaving a one or two nucleotide 3' overhang. Responsible for the end-turnover of tRNA: specifically removes the terminal AMP residue from uncharged tRNA (tRNA-C-C-A). Also appears to be involved in tRNA biosynthesis. The chain is Ribonuclease T from Pseudomonas fluorescens (strain ATCC BAA-477 / NRRL B-23932 / Pf-5).